Reading from the N-terminus, the 446-residue chain is Xylose isomerase 1 (446 aa).

Catalysis depends on residues H109 and D112. Mg(2+) is bound by residues E240, E276, H279, D304, D315, D317, and D347.

The protein belongs to the xylose isomerase family. In terms of assembly, homotetramer. Mg(2+) is required as a cofactor.

Its subcellular location is the cytoplasm. The enzyme catalyses alpha-D-xylose = alpha-D-xylulofuranose. This chain is Xylose isomerase 1, found in Xanthomonas campestris pv. campestris (strain 8004).